The sequence spans 201 residues: MEQTEVMKPETLEDLIKTLHQIFQSDSINVEEVQNLMESYQSNPQDWMKFAKFDQYRYTRNLVDEGNGKFNLMILCWGEGHGSSIHDHTDSHCFLKLLQGQLKETLFDWPDRKLQSGMKPRGQSVLQENQCAYINDSLGLHRVENVSHTEPAVSLHLYSPPFQSCRTFDQRTGHHNTVKMTFWSKYGERTPYELSVSQENN.

Histidine 86, histidine 88, and histidine 141 together coordinate Fe cation. Residues cysteine 93–tyrosine 158 constitute a cross-link (3'-(S-cysteinyl)-tyrosine (Cys-Tyr)).

This sequence belongs to the cysteine dioxygenase family. As to quaternary structure, monomer. The cofactor is Fe cation. Ni(2+) is required as a cofactor. Zn(2+) serves as cofactor. The thioether cross-link between Cys-93 and Tyr-158 plays a structural role through stabilizing the Fe(2+) ion, and prevents the production of highly damaging free hydroxyl radicals by holding the oxygen radical via hydroxyl hydrogen.

It carries out the reaction L-cysteine + O2 = 3-sulfino-L-alanine + H(+). Its pathway is organosulfur biosynthesis; taurine biosynthesis; hypotaurine from L-cysteine: step 1/2. In terms of biological role, catalyzes the oxidation of cysteine to cysteine sulfinic acid with addition of molecular dioxygen. The protein is Cysteine dioxygenase type 1 (cdo1) of Danio rerio (Zebrafish).